The chain runs to 439 residues: Xylose isomerase (439 aa).

Active-site residues include His101 and Asp104. Mg(2+) contacts are provided by Glu232, Glu268, His271, Asp296, Asp307, Asp309, and Asp339.

This sequence belongs to the xylose isomerase family. In terms of assembly, homotetramer. Mg(2+) serves as cofactor.

Its subcellular location is the cytoplasm. It catalyses the reaction alpha-D-xylose = alpha-D-xylulofuranose. The protein is Xylose isomerase of Serratia proteamaculans (strain 568).